Here is a 274-residue protein sequence, read N- to C-terminus: Large ribosomal subunit protein uL2cz/uL2cy (274 aa).

Disordered stretches follow at residues 1-25 (MAIH…VKSN) and 224-274 (NPVD…RRSK).

The protein belongs to the universal ribosomal protein uL2 family. As to quaternary structure, part of the 50S ribosomal subunit.

It is found in the plastid. The protein resides in the chloroplast. In Cucumis sativus (Cucumber), this protein is Large ribosomal subunit protein uL2cz/uL2cy (rpl2-A).